A 356-amino-acid chain; its full sequence is Poly(rC)-binding protein 1 (356 aa).

Methionine 1 is modified (N-acetylmethionine). KH domains are found at residues threonine 13–isoleucine 75 and proline 97–isoleucine 162. A Glycyl lysine isopeptide (Lys-Gly) (interchain with G-Cter in SUMO2) cross-link involves residue lysine 115. 6 positions are modified to phosphoserine: serine 173, serine 189, serine 190, serine 246, serine 264, and serine 273. Positions glutamine 279–isoleucine 343 constitute a KH 3 domain.

Post-translationally, phosphorylated; lowers poly(rC)-binding activity.

Its subcellular location is the nucleus. It localises to the cytoplasm. Single-stranded nucleic acid binding protein that binds preferentially to oligo dC. Together with PCBP2, required for erythropoiesis, possibly by regulating mRNA splicing. The sequence is that of Poly(rC)-binding protein 1 (PCBP1) from Bos taurus (Bovine).